The sequence spans 520 residues: Pleckstrin homology domain-containing family O member 1-A (520 aa).

Disordered regions lie at residues 1 to 23, 208 to 296, 313 to 439, and 497 to 520; these read MKKS…QPDK, SLDK…GHLQ, IQEQ…KSTD, and QARQ…QKSP. Residues 20–131 form the PH domain; that stretch reads QPDKVGWIRR…WINVLNTAIT (112 aa). Polar residues predominate over residues 227-241; it reads PASNTEAQEKTSSLP. Basic and acidic residues-rich tracts occupy residues 242-255 and 333-347; these read RKSE…DHPR and DSPR…DSPH. Residues 348–361 show a composition bias toward low complexity; that stretch reads SKGSSSPHSANSPS. Composition is skewed to basic and acidic residues over residues 363-385 and 396-418; these read RAKD…DSPR and KSID…DLTH. Positions 420 to 439 are enriched in polar residues; that stretch reads KGSQSPLSTGSNSPHMKSTD. The span at 497-506 shows a compositional bias: basic and acidic residues; that stretch reads QARQRREELS. Residues 509 to 520 show a composition bias toward polar residues; it reads GMASQKLQQKSP.

C-terminal fragments could be released during apoptosis via caspase-3-dependent cleavage.

It is found in the membrane. The protein localises to the nucleus. It localises to the cytoplasm. Its function is as follows. Plays a role in the regulation of the actin cytoskeleton through its interactions with actin capping protein (CP). This is Pleckstrin homology domain-containing family O member 1-A (plekho1a) from Danio rerio (Zebrafish).